The chain runs to 378 residues: uncharacterized protein (378 aa).

Residues Cys38, His60, Cys90, Cys93, Cys96, and Cys104 each contribute to the Zn(2+) site.

It belongs to the zinc-containing alcohol dehydrogenase family. Class-III subfamily. Zn(2+) is required as a cofactor.

This is an uncharacterized protein from Bacillus subtilis (strain 168).